The following is a 614-amino-acid chain: Acetylcholinesterase (614 aa).

The signal sequence occupies residues 1–31 (MRPPWYPLHTPSLAFPLLFLLLSLLGGGARA). Cys-100 and Cys-127 are joined by a disulfide. Ser-234 functions as the Acyl-ester intermediate in the catalytic mechanism. Residues Cys-288 and Cys-303 are joined by a disulfide bond. N-linked (GlcNAc...) asparagine glycosylation occurs at Asn-296. Glu-365 serves as the catalytic Charge relay system. The N-linked (GlcNAc...) asparagine glycan is linked to Asn-381. The cysteines at positions 440 and 560 are disulfide-linked. His-478 functions as the Charge relay system in the catalytic mechanism. A glycan (N-linked (GlcNAc...) asparagine) is linked at Asn-495.

It belongs to the type-B carboxylesterase/lipase family. In terms of assembly, isoform H generates GPI-anchored dimers; disulfide linked. Isoform T generates multiple structures, ranging from monomers and dimers to collagen-tailed and hydrophobic-tailed forms, in which catalytic tetramers are associated with anchoring proteins that attach them to the basal lamina or to cell membranes. In the collagen-tailed forms, isoform T subunits are associated with a specific collagen, COLQ, which triggers the formation of isoform T tetramers, from monomers and dimers. Interacts with PRIMA1. The interaction with PRIMA1 is required to anchor it to the basal lamina of cells and organize into tetramers. In terms of tissue distribution, predominates in most expressing tissues except erythrocytes where a glycophospholipid-attached form of ACHE predominates.

The protein localises to the synapse. It is found in the secreted. Its subcellular location is the cell membrane. It carries out the reaction acetylcholine + H2O = choline + acetate + H(+). Terminates signal transduction at the neuromuscular junction by rapid hydrolysis of the acetylcholine released into the synaptic cleft. The polypeptide is Acetylcholinesterase (Ache) (Mus musculus (Mouse)).